We begin with the raw amino-acid sequence, 332 residues long: DNA-directed RNA polymerase subunit alpha (332 aa).

Positions 1-234 are alpha N-terminal domain (alpha-NTD); that stretch reads MTVTANQVLR…DQLSVFGDFT (234 aa). The tract at residues 248-332 is alpha C-terminal domain (alpha-CTD); that stretch reads VDPVLLRPID…AGVASHGMLG (85 aa).

This sequence belongs to the RNA polymerase alpha chain family. In terms of assembly, homodimer. The RNAP catalytic core consists of 2 alpha, 1 beta, 1 beta' and 1 omega subunit. When a sigma factor is associated with the core the holoenzyme is formed, which can initiate transcription.

It catalyses the reaction RNA(n) + a ribonucleoside 5'-triphosphate = RNA(n+1) + diphosphate. Its function is as follows. DNA-dependent RNA polymerase catalyzes the transcription of DNA into RNA using the four ribonucleoside triphosphates as substrates. The sequence is that of DNA-directed RNA polymerase subunit alpha from Stenotrophomonas maltophilia (strain R551-3).